The chain runs to 476 residues: Inosine-5'-monophosphate dehydrogenase (476 aa).

2 CBS domains span residues 93–151 and 152–211; these read IIRD…VKDI and MTKD…TRDE. Residues D242 and 292 to 294 contribute to the NAD(+) site; that span reads GIG. K(+) contacts are provided by G294 and G296. S297 lines the IMP pocket. A K(+)-binding site is contributed by C299. The Thioimidate intermediate role is filled by C299. IMP is bound by residues 334 to 336, 357 to 358, and 381 to 385; these read DGG, GY, and YRGMG. The Proton acceptor role is filled by R398. E408 lines the IMP pocket. E462 serves as a coordination point for K(+).

Belongs to the IMPDH/GMPR family. Homotetramer. K(+) is required as a cofactor.

The catalysed reaction is IMP + NAD(+) + H2O = XMP + NADH + H(+). It functions in the pathway purine metabolism; XMP biosynthesis via de novo pathway; XMP from IMP: step 1/1. Its activity is regulated as follows. Mycophenolic acid (MPA) is a non-competitive inhibitor that prevents formation of the closed enzyme conformation by binding to the same site as the amobile flap. In contrast, mizoribine monophosphate (MZP) is a competitive inhibitor that induces the closed conformation. MPA is a potent inhibitor of mammalian IMPDHs but a poor inhibitor of the bacterial enzymes. MZP is a more potent inhibitor of bacterial IMPDH. In terms of biological role, catalyzes the conversion of inosine 5'-phosphate (IMP) to xanthosine 5'-phosphate (XMP), the first committed and rate-limiting step in the de novo synthesis of guanine nucleotides, and therefore plays an important role in the regulation of cell growth. This chain is Inosine-5'-monophosphate dehydrogenase, found in Korarchaeum cryptofilum (strain OPF8).